Consider the following 342-residue polypeptide: N-acetyl-gamma-glutamyl-phosphate reductase (342 aa).

Cys-149 is a catalytic residue.

Belongs to the NAGSA dehydrogenase family. Type 1 subfamily.

Its subcellular location is the cytoplasm. It carries out the reaction N-acetyl-L-glutamate 5-semialdehyde + phosphate + NADP(+) = N-acetyl-L-glutamyl 5-phosphate + NADPH + H(+). The protein operates within amino-acid biosynthesis; L-arginine biosynthesis; N(2)-acetyl-L-ornithine from L-glutamate: step 3/4. In terms of biological role, catalyzes the NADPH-dependent reduction of N-acetyl-5-glutamyl phosphate to yield N-acetyl-L-glutamate 5-semialdehyde. The protein is N-acetyl-gamma-glutamyl-phosphate reductase of Cereibacter sphaeroides (strain ATCC 17029 / ATH 2.4.9) (Rhodobacter sphaeroides).